The chain runs to 1102 residues: Probable ubiquitin-conjugating enzyme E2 23 (1102 aa).

Disordered regions lie at residues 1 to 20 (MEHE…DSSV), 25 to 111 (ASLS…DGNY), 396 to 418 (LPKV…PVHE), 579 to 602 (SPGN…SHQE), 661 to 710 (DESV…DIYA), and 760 to 800 (QAES…KNIL). Residues 31-44 (DSEHPNIYRQDIVK) show a composition bias toward basic and acidic residues. The segment covering 59-88 (GDSDSDSDISDEEEDDDDDEDNDDDDEDVE) has biased composition (acidic residues). The segment covering 579-596 (SPGNSFEEATQQDNGYQD) has biased composition (polar residues). Over residues 779-800 (SKVNVTDNCESKGTQANAKNIL) the composition is skewed to polar residues. In terms of domain architecture, UBC core spans 850–1010 (QWFKKVDQDW…TFLLNCKTMM (161 aa)). Residue Cys936 is the Glycyl thioester intermediate of the active site.

It belongs to the ubiquitin-conjugating enzyme family.

The enzyme catalyses S-ubiquitinyl-[E1 ubiquitin-activating enzyme]-L-cysteine + [E2 ubiquitin-conjugating enzyme]-L-cysteine = [E1 ubiquitin-activating enzyme]-L-cysteine + S-ubiquitinyl-[E2 ubiquitin-conjugating enzyme]-L-cysteine.. Its pathway is protein modification; protein ubiquitination. Accepts the ubiquitin from the E1 complex and catalyzes its covalent attachment to other proteins. This is Probable ubiquitin-conjugating enzyme E2 23 (UBC23) from Arabidopsis thaliana (Mouse-ear cress).